Consider the following 451-residue polypeptide: Tubulin alpha-1 chain (451 aa).

Position 11 (Gln11) interacts with GTP. At Lys40 the chain carries N6-acetyllysine. Residues Glu71, Gly144, Thr145, Thr179, Asn206, and Asn228 each coordinate GTP. Glu71 lines the Mg(2+) pocket. Glu254 is a catalytic residue. The interval 432-451 (YEEVGADSAEGDEEDEGDEY) is disordered.

It belongs to the tubulin family. As to quaternary structure, dimer of alpha and beta chains. A typical microtubule is a hollow water-filled tube with an outer diameter of 25 nm and an inner diameter of 15 nM. Alpha-beta heterodimers associate head-to-tail to form protofilaments running lengthwise along the microtubule wall with the beta-tubulin subunit facing the microtubule plus end conferring a structural polarity. Microtubules usually have 13 protofilaments but different protofilament numbers can be found in some organisms and specialized cells. Requires Mg(2+) as cofactor. Post-translationally, undergoes a tyrosination/detyrosination cycle, the cyclic removal and re-addition of a C-terminal tyrosine residue by the enzymes tubulin tyrosine carboxypeptidase (TTCP) and tubulin tyrosine ligase (TTL), respectively. In terms of processing, acetylation of alpha chains at Lys-40 stabilizes microtubules and affects affinity and processivity of microtubule motors. This modification has a role in multiple cellular functions, ranging from cell motility, cell cycle progression or cell differentiation to intracellular trafficking and signaling.

The protein resides in the cytoplasm. It localises to the cytoskeleton. It catalyses the reaction GTP + H2O = GDP + phosphate + H(+). Its function is as follows. Tubulin is the major constituent of microtubules, a cylinder consisting of laterally associated linear protofilaments composed of alpha- and beta-tubulin heterodimers. Microtubules grow by the addition of GTP-tubulin dimers to the microtubule end, where a stabilizing cap forms. Below the cap, tubulin dimers are in GDP-bound state, owing to GTPase activity of alpha-tubulin. In Gossypium hirsutum (Upland cotton), this protein is Tubulin alpha-1 chain.